We begin with the raw amino-acid sequence, 293 residues long: Ribosomal protein L11 methyltransferase (293 aa).

Residues T145, G166, D188, and N230 each coordinate S-adenosyl-L-methionine.

This sequence belongs to the methyltransferase superfamily. PrmA family.

It localises to the cytoplasm. The catalysed reaction is L-lysyl-[protein] + 3 S-adenosyl-L-methionine = N(6),N(6),N(6)-trimethyl-L-lysyl-[protein] + 3 S-adenosyl-L-homocysteine + 3 H(+). Its function is as follows. Methylates ribosomal protein L11. The polypeptide is Ribosomal protein L11 methyltransferase (Actinobacillus pleuropneumoniae serotype 7 (strain AP76)).